Consider the following 311-residue polypeptide: Thioredoxin reductase (311 aa).

Position 33–43 (33–43 (EGFFSGISGGQ)) interacts with FAD. Cysteines 138 and 141 form a disulfide. Residue 283-292 (DVQDKYYRQA) coordinates FAD.

This sequence belongs to the class-II pyridine nucleotide-disulfide oxidoreductase family. Homodimer. It depends on FAD as a cofactor.

Its subcellular location is the cytoplasm. The catalysed reaction is [thioredoxin]-dithiol + NADP(+) = [thioredoxin]-disulfide + NADPH + H(+). This Chlamydia pneumoniae (Chlamydophila pneumoniae) protein is Thioredoxin reductase (trxB).